The sequence spans 232 residues: Clarin-2 (232 aa).

4 helical membrane-spanning segments follow: residues 8–28, 101–121, 139–159, and 188–208; these read VWYG…IVAL, ILLL…FAIL, LWNV…MAAV, and SFWI…VVAI.

The protein belongs to the clarin family. In terms of tissue distribution, detected in inner ear, particularly in hair bundles of auditory hair cells and is enriched in apical stereocilia. Detected in eye, but not in brain or muscle.

It is found in the cell projection. It localises to the stereocilium membrane. Plays a key role to hearing function. Required for normal organization and maintenance of the stereocilia bundle and for mechano-electrical transduction. This Mus musculus (Mouse) protein is Clarin-2.